Reading from the N-terminus, the 367-residue chain is Cobalt-precorrin-5B C(1)-methyltransferase (367 aa).

The protein belongs to the CbiD family.

The catalysed reaction is Co-precorrin-5B + S-adenosyl-L-methionine = Co-precorrin-6A + S-adenosyl-L-homocysteine. It participates in cofactor biosynthesis; adenosylcobalamin biosynthesis; cob(II)yrinate a,c-diamide from sirohydrochlorin (anaerobic route): step 6/10. In terms of biological role, catalyzes the methylation of C-1 in cobalt-precorrin-5B to form cobalt-precorrin-6A. In Leptospira interrogans serogroup Icterohaemorrhagiae serovar copenhageni (strain Fiocruz L1-130), this protein is Cobalt-precorrin-5B C(1)-methyltransferase.